The sequence spans 415 residues: L-cysteine:1D-myo-inositol 2-amino-2-deoxy-alpha-D-glucopyranoside ligase (415 aa).

Cysteine 43 is a Zn(2+) binding site. Residues 43–46 (CGIT), threonine 58, and 81–83 (NVT) each bind L-cysteinyl-5'-AMP. Positions 45 to 55 (ITPYDATHLGH) match the 'HIGH' region motif. The short motif at 188-193 (ERGGDP) is the 'ERGGDP' region element. Tryptophan 229 lines the L-cysteinyl-5'-AMP pocket. Cysteine 233 serves as a coordination point for Zn(2+). Residue 251–253 (GSD) participates in L-cysteinyl-5'-AMP binding. Histidine 258 serves as a coordination point for Zn(2+). An L-cysteinyl-5'-AMP-binding site is contributed by valine 285. Residues 291-295 (KMSKS) carry the 'KMSKS' region motif.

The protein belongs to the class-I aminoacyl-tRNA synthetase family. MshC subfamily. In terms of assembly, monomer. It depends on Zn(2+) as a cofactor.

The enzyme catalyses 1D-myo-inositol 2-amino-2-deoxy-alpha-D-glucopyranoside + L-cysteine + ATP = 1D-myo-inositol 2-(L-cysteinylamino)-2-deoxy-alpha-D-glucopyranoside + AMP + diphosphate + H(+). Its function is as follows. Catalyzes the ATP-dependent condensation of GlcN-Ins and L-cysteine to form L-Cys-GlcN-Ins. The protein is L-cysteine:1D-myo-inositol 2-amino-2-deoxy-alpha-D-glucopyranoside ligase of Cellulomonas flavigena (strain ATCC 482 / DSM 20109 / BCRC 11376 / JCM 18109 / NBRC 3775 / NCIMB 8073 / NRS 134).